Consider the following 348-residue polypeptide: D-alanine--D-alanine ligase (348 aa).

The region spanning lysine 132–valine 334 is the ATP-grasp domain. Residue leucine 162 to glutamate 217 coordinates ATP. The Mg(2+) site is built by aspartate 288, glutamate 301, and asparagine 303.

The protein belongs to the D-alanine--D-alanine ligase family. Requires Mg(2+) as cofactor. Mn(2+) is required as a cofactor.

It localises to the cytoplasm. It carries out the reaction 2 D-alanine + ATP = D-alanyl-D-alanine + ADP + phosphate + H(+). It functions in the pathway cell wall biogenesis; peptidoglycan biosynthesis. Cell wall formation. This Streptococcus thermophilus (strain ATCC BAA-491 / LMD-9) protein is D-alanine--D-alanine ligase.